We begin with the raw amino-acid sequence, 85 residues long: Beta-insect depressant toxin Lqh-dprIT3b (85 aa).

The first 21 residues, 1-21 (MKLLLLLTISASMLIEGLVNA), serve as a signal peptide directing secretion. Residues 22 to 82 (DGYIRGGDGC…EWDYETNTCG (61 aa)) form the LCN-type CS-alpha/beta domain. Disulfide bonds link Cys31–Cys81, Cys35–Cys56, Cys42–Cys63, and Cys46–Cys65. Gly82 bears the Glycine amide mark.

This sequence belongs to the long (4 C-C) scorpion toxin superfamily. Sodium channel inhibitor family. Beta subfamily. In terms of tissue distribution, expressed by the venom gland.

It is found in the secreted. Depressant insect beta-toxins cause a transient contraction paralysis followed by a slow flaccid paralysis. They bind voltage-independently at site-4 of sodium channels (Nav) and block action potentials, primarily by depolarizing the axonal membrane and suppressing the sodium current. This depressant toxin is active only on insects. It is found in a relatively small amount in the venom, and its activity on insects is 10-fold higher compared to other known depressant toxins. This Leiurus hebraeus (Hebrew deathstalker scorpion) protein is Beta-insect depressant toxin Lqh-dprIT3b.